The chain runs to 785 residues: Endonuclease MutS2 (785 aa).

Residue 335–342 coordinates ATP; sequence GPNTGGKT. One can recognise a Smr domain in the interval 710 to 785; the sequence is LDLRGERYED…GNGVTIVEFK (76 aa).

Belongs to the DNA mismatch repair MutS family. MutS2 subfamily. In terms of assembly, homodimer. Binds to stalled ribosomes, contacting rRNA.

Functionally, endonuclease that is involved in the suppression of homologous recombination and thus may have a key role in the control of bacterial genetic diversity. In terms of biological role, acts as a ribosome collision sensor, splitting the ribosome into its 2 subunits. Detects stalled/collided 70S ribosomes which it binds and splits by an ATP-hydrolysis driven conformational change. Acts upstream of the ribosome quality control system (RQC), a ribosome-associated complex that mediates the extraction of incompletely synthesized nascent chains from stalled ribosomes and their subsequent degradation. Probably generates substrates for RQC. The sequence is that of Endonuclease MutS2 from Listeria monocytogenes serotype 4a (strain HCC23).